The primary structure comprises 686 residues: AsmA family protein YhjG (686 aa).

Residues 1–6 (MSKAGK) lie on the Cytoplasmic side of the membrane. A helical membrane pass occupies residues 7-27 (ITAAISGAFLLLIVVAIILIA). Residues 28–686 (TFDWNRLKPT…CRTILSQMKK (659 aa)) are Periplasmic-facing. The interval 372-396 (VDSGKGAEKSKRSEQKKGEKSVQPA) is disordered. Over residues 376–391 (KGAEKSKRSEQKKGEK) the composition is skewed to basic and acidic residues.

It belongs to the AsmA family.

The protein resides in the cell inner membrane. This chain is AsmA family protein YhjG (yhjG), found in Escherichia coli (strain K12).